The following is a 96-amino-acid chain: ESAT-6-like protein SAG1039 (96 aa).

The protein belongs to the WXG100 family. sagEsxA-like subfamily. Homodimer.

This Streptococcus agalactiae serotype V (strain ATCC BAA-611 / 2603 V/R) protein is ESAT-6-like protein SAG1039.